A 359-amino-acid polypeptide reads, in one-letter code: Structure-specific endonuclease subunit SLX1 homolog (359 aa).

In terms of domain architecture, GIY-YIG spans 9-91 (GLFACYCLVA…TYPTRSRYVN (83 aa)). The segment at 192–238 (CPICQDGVSPSNVQCMQCSARFCITCAGKLFTRRNTLIPCFGKCPIC) adopts an SLX1-type zinc-finger fold. The interval 256–359 (VAGRKSVPHK…LPSDVISITD (104 aa)) is disordered. Residues 269–281 (VDGQSSLSQNSSY) show a composition bias toward polar residues. Over residues 295–306 (EPEKDDISRDES) the composition is skewed to basic and acidic residues. Residues 316–326 (SSVALSDSSRS) are compositionally biased toward low complexity.

Belongs to the SLX1 family. In terms of assembly, forms a heterodimer with a member of the SLX4 family. Requires a divalent metal cation as cofactor.

It localises to the nucleus. Catalytic subunit of a heterodimeric structure-specific endonuclease that resolves DNA secondary structures generated during DNA repair and recombination. Has endonuclease activity towards branched DNA substrates, introducing single-strand cuts in duplex DNA close to junctions with ss-DNA. The polypeptide is Structure-specific endonuclease subunit SLX1 homolog (Giardia intestinalis (strain ATCC 50803 / WB clone C6) (Giardia lamblia)).